The sequence spans 432 residues: Fibrinogen gamma chain (432 aa).

The first 24 residues, 1–24 (MGRIGTPVFLAFLSALTCSLQVHA), serve as a signal peptide directing secretion. One can recognise a Fibrinogen C-terminal domain in the interval 169 to 412 (KISPITGKDC…MTTMKLLPMG (244 aa)). A disulfide bridge connects residues Cys178 and Cys207. N-linked (GlcNAc...) asparagine glycosylation is present at Asn227. Asp340, Asp342, Tyr344, and Gly346 together coordinate Ca(2+). A disulfide bond links Cys348 and Cys361. Positions 413–432 (RDLSGHGGQQQSKGNSRGDN) are disordered. The span at 421 to 432 (QQQSKGNSRGDN) shows a compositional bias: polar residues.

As to quaternary structure, heterohexamer; disulfide linked. Contains 2 sets of 3 non-identical chains (alpha, beta and gamma). The 2 heterotrimers are in head to head conformation with the N-termini in a small central domain. Conversion of fibrinogen to fibrin is triggered by thrombin, which cleaves fibrinopeptides A and B from alpha and beta chains, and thus exposes the N-terminal polymerization sites responsible for the formation of the soft clot. The soft clot is converted into the hard clot by factor XIIIA which catalyzes the epsilon-(gamma-glutamyl)lysine cross-linking between gamma chains (stronger) and between alpha chains (weaker) of different monomers.

The protein localises to the secreted. In terms of biological role, together with fibrinogen alpha (FGA) and fibrinogen beta (FGB), polymerizes to form an insoluble fibrin matrix. Has a major function in hemostasis as one of the primary components of blood clots. This Petromyzon marinus (Sea lamprey) protein is Fibrinogen gamma chain (FGG).